The chain runs to 132 residues: Aspartate 1-decarboxylase (132 aa).

Serine 25 (schiff-base intermediate with substrate; via pyruvic acid) is an active-site residue. The residue at position 25 (serine 25) is a Pyruvic acid (Ser). Threonine 57 is a substrate binding site. Catalysis depends on tyrosine 58, which acts as the Proton donor. 73-75 (GAA) contacts substrate.

This sequence belongs to the PanD family. As to quaternary structure, heterooctamer of four alpha and four beta subunits. Pyruvate serves as cofactor. Is synthesized initially as an inactive proenzyme, which is activated by self-cleavage at a specific serine bond to produce a beta-subunit with a hydroxyl group at its C-terminus and an alpha-subunit with a pyruvoyl group at its N-terminus.

The protein resides in the cytoplasm. The enzyme catalyses L-aspartate + H(+) = beta-alanine + CO2. The protein operates within cofactor biosynthesis; (R)-pantothenate biosynthesis; beta-alanine from L-aspartate: step 1/1. Functionally, catalyzes the pyruvoyl-dependent decarboxylation of aspartate to produce beta-alanine. In Pelotomaculum thermopropionicum (strain DSM 13744 / JCM 10971 / SI), this protein is Aspartate 1-decarboxylase.